We begin with the raw amino-acid sequence, 323 residues long: Transcription factor JunD (323 aa).

Disordered stretches follow at residues 138 to 173 (QNQL…APGL) and 197 to 221 (PFAA…QIVP). A compositionally biased stretch (gly residues) spans 141-167 (LGGGGGPNGGAAAAGGGGGGGGGGGGE). Residues 198–212 (FAAPPPRLPPPPPPP) are compositionally biased toward pro residues. Positions 242 to 269 (RIKAERKRLRNRIAASKCRKRKLERISR) are basic motif. Positions 242-305 (RIKAERKRLR…AQLKQKVLSH (64 aa)) constitute a bZIP domain. The interval 270-298 (LEEKVKSLKSQNTELASTASLLREQVAQL) is leucine-zipper.

Belongs to the bZIP family. Jun subfamily. As to quaternary structure, binds DNA as a dimer.

Its subcellular location is the nucleus. This chain is Transcription factor JunD (JUND), found in Gallus gallus (Chicken).